Consider the following 178-residue polypeptide: uncharacterized protein (178 aa).

The N-terminal stretch at 1–19 (MKKLLIVTMLFTLALSAQA) is a signal peptide.

The protein belongs to the opacity porin family.

This is an uncharacterized protein from Haemophilus influenzae (strain ATCC 51907 / DSM 11121 / KW20 / Rd).